The following is a 396-amino-acid chain: Probable 20S rRNA accumulation protein 4 (396 aa).

The protein belongs to the TSR4 family.

Its subcellular location is the cytoplasm. It localises to the nucleus. It is found in the nucleolus. Its function is as follows. Required for processing of the 20S pre-rRNA at site D to generate mature 18S rRNA. This is Probable 20S rRNA accumulation protein 4 from Schizosaccharomyces pombe (strain 972 / ATCC 24843) (Fission yeast).